The sequence spans 572 residues: MNKLKSNFILNIVILFTILIFNINFINCENQKQQQHQQQQQQQQQQSSSTTTTLPIYSIKFSSETGFTIYSGNDSTSIAQSGFSNEMMTMGWAYLTITTNSQFEDSLQAEAAGYIEGYLTFEMIWQCWYNILVNEYQNQTIPNQVLNWANENIAYMKQQVATNENDPYWINIGLVLTQLSGMVDGYNAANQDPSRQLSFLDFILINMDADLGDISSTFNQSTSFSEISNFKKSMDHIKKTDHCSGLIKLTDDLTELYSAHTSWSSYINMLRIFKSYNFKFSSITNIKSKLTLFSGYPATIASLDDFYLLDTKLVVLETTNGLNNNDLYYLIKPESVLTWMRVIIANRLANGGQSWCETFERENSGTYNNQWMIVDYNKFVPGVKVRDGTLFVLEQVPGYIEFADVTNVLRTGYWPSYNIPYFETIFNMSGFNDELTDSSDYEAYEEDARSQIFRRDANKVYSLTDFQAIMRYNNFQNDPLSHGDAANQISSRFDLNSPDSQDYDAFGGVDSKVTSFSLVNQLLVIAQSGPTHDQEPPFQWSSANWSNIYPSIGMPNLYDFGWVNFTDISYNY.

A signal peptide spans 1 to 28 (MNKLKSNFILNIVILFTILIFNINFINC). 6 N-linked (GlcNAc...) asparagine glycosylation sites follow: asparagine 73, asparagine 138, asparagine 219, asparagine 427, asparagine 544, and asparagine 564.

Belongs to the phospholipase B-like family.

The protein localises to the secreted. In terms of biological role, probable phospholipase. The polypeptide is Phospholipase B-like protein B (plbB) (Dictyostelium discoideum (Social amoeba)).